Here is a 762-residue protein sequence, read N- to C-terminus: MAIQTSNLGYPRIGLQREWKKTLEAFWSNKIDEEQFLTTMKEIRLQHVKVQQEKGIELIPVGDFTYYDHVLDTAYMLGFIPSRFSEFTSYLDVYFAMARGSKDHVASEMTKWFNTNYHYIVPEYEEGLQISLKDNRPLRLYEEAKKELGVDGKPVILGPYTFLKLAKGYNEEQFATILKELVAPYVQLFSELHAAGAQIIQVDEPIFASLTKDEINQAKELYEAIHKEVPNANLLLQTYFDSVEENYEEIIAFPVSGIGLDFVHGKEGNVNAISKYGFPADKILAIGCIDGRNIWRADLDDVLSLFTTLQNQITAKGLIVQPSCSLLHTPIDKTEETHLTSELFDALAFANQKLEELVLIHSALTKGVESISSDLTTYRNAHHAIRSSAARNREDVKVARTSLKEDDFSRPLPFEKRYELQQVALQLPLLPTTTIGSFPQTSEVRQTRKQWRNGDITNEQYNQFIEKETAKWIRYQEDIGLDVLVHGEFERTDMVEYFGERLAGFSFTKNGWVQSYGSRCVKPPVIYGDVAFISGMTIKETVYAQSLTEKVVKGMLTGPVTILNWSFVRNDISRKEVSYQIALALRHEIELLESSGIRVIQVDEPALREGMPLKEKDWDAYITWAVQSFLLATSSVENETQIHTHMCYSNFEDIVDAIRALDADVISIETSRSHGEFINTLKHTTYEKGIGLGVYDIHSPRVPSKDEMFTIVEQSLQVCDPKYFWINPDCGLKTRRTEEVIPALEHMVQAAKDARSLLKTNA.

5-methyltetrahydropteroyltri-L-glutamate-binding positions include R17–K20 and K111. L-homocysteine-binding positions include I435 to S437 and E488. L-methionine contacts are provided by residues I435 to S437 and E488. Residues R519 to C520 and W565 each bind 5-methyltetrahydropteroyltri-L-glutamate. D603 is a binding site for L-homocysteine. D603 is an L-methionine binding site. 5-methyltetrahydropteroyltri-L-glutamate is bound at residue E609. Zn(2+)-binding residues include H645, C647, and E669. H698 acts as the Proton donor in catalysis. C730 provides a ligand contact to Zn(2+).

The protein belongs to the vitamin-B12 independent methionine synthase family. Zn(2+) serves as cofactor.

It catalyses the reaction 5-methyltetrahydropteroyltri-L-glutamate + L-homocysteine = tetrahydropteroyltri-L-glutamate + L-methionine. It functions in the pathway amino-acid biosynthesis; L-methionine biosynthesis via de novo pathway; L-methionine from L-homocysteine (MetE route): step 1/1. Its function is as follows. Catalyzes the transfer of a methyl group from 5-methyltetrahydrofolate to homocysteine resulting in methionine formation. In Bacillus mycoides (strain KBAB4) (Bacillus weihenstephanensis), this protein is 5-methyltetrahydropteroyltriglutamate--homocysteine methyltransferase.